Here is a 289-residue protein sequence, read N- to C-terminus: Protoheme IX farnesyltransferase 2 (289 aa).

9 consecutive transmembrane segments (helical) span residues 4–24 (PGII…AAKG), 28–48 (LVLM…GCAI), 66–86 (RVTV…LALG), 99–118 (ALAL…VYSL), 124–144 (SVYG…VGYC), 155–175 (AILL…IAIF), 199–219 (LHIV…PLAG), 221–241 (TGIA…AMAL), and 256–276 (QVFG…ALDF).

This sequence belongs to the UbiA prenyltransferase family. Protoheme IX farnesyltransferase subfamily.

Its subcellular location is the cell inner membrane. It carries out the reaction heme b + (2E,6E)-farnesyl diphosphate + H2O = Fe(II)-heme o + diphosphate. The protein operates within porphyrin-containing compound metabolism; heme O biosynthesis; heme O from protoheme: step 1/1. In terms of biological role, converts heme B (protoheme IX) to heme O by substitution of the vinyl group on carbon 2 of heme B porphyrin ring with a hydroxyethyl farnesyl side group. This Shewanella baltica (strain OS195) protein is Protoheme IX farnesyltransferase 2.